A 161-amino-acid chain; its full sequence is Ragulator complex protein LAMTOR1 (161 aa).

The disordered stretch occupies residues 1-43 (MGCCYSSENEDSDQDREERKLLLDPSSPPTKALNGAEPNYHSL). The N-myristoyl glycine moiety is linked to residue glycine 2. 2 S-palmitoyl cysteine lipidation sites follow: cysteine 3 and cysteine 4. Lysine 20 participates in a covalent cross-link: Glycyl lysine isopeptide (Lys-Gly) (interchain with G-Cter in ubiquitin). Serine 27 is subject to Phosphoserine. Residue lysine 31 forms a Glycyl lysine isopeptide (Lys-Gly) (interchain with G-Cter in ubiquitin) linkage. A phosphoserine mark is found at serine 42 and serine 56. Residue lysine 60 forms a Glycyl lysine isopeptide (Lys-Gly) (interchain with G-Cter in ubiquitin) linkage. Serine 98 carries the phosphoserine modification. Glycyl lysine isopeptide (Lys-Gly) (interchain with G-Cter in ubiquitin) cross-links involve residues lysine 103 and lysine 104. The interval 121–161 (SEPIPFSDLQQVSRIAAYAYSALSQIRVDAKEELVVQFGIP) is interaction with LAMTOR2 and LAMTOR3. Serine 141 carries the post-translational modification Phosphoserine.

Belongs to the LAMTOR1 family. As to quaternary structure, part of the Ragulator complex composed of LAMTOR1, LAMTOR2, LAMTOR3, LAMTOR4 and LAMTOR5. LAMTOR4 and LAMTOR5 form a heterodimer that interacts, through LAMTOR1, with a LAMTOR2, LAMTOR3 heterodimer. Interacts with LAMTOR2 and LAMTOR3; the interaction is direct. The Ragulator complex interacts with both the mTORC1 complex and heterodimers constituted of the Rag GTPases RagA/RRAGA, RagB/RRAGB, RagC/RRAGC and RagD/RRAGD; regulated by amino acid availability. The Ragulator complex interacts with SLC38A9; the probable amino acid sensor. Component of the lysosomal folliculin complex (LFC), composed of FLCN, FNIP1 (or FNIP2), RagA/RRAGA or RagB/RRAGB GDP-bound, RagC/RRAGC or RagD/RRAGD GTP-bound, and Ragulator. Associates with the lysosomal V-ATPase complex; interaction promotes the guanine nucleotide exchange factor (GEF) of the Ragulator complex. Interacts with MMP14. Interacts with CDKN1B; prevents the interaction of CDKN1B with RHOA leaving RHOA in a form accessible to activation by ARHGEF2. Interacts with PIP4P1. In terms of processing, N-terminal myristoylation and palmitoylation mediates its recruitment to lysosome membranes, thereby promoting localization of the Ragulator complex to lysosomes. N-myristoylation by NMT1 is required for palmitoylation at Cys-3 and Cys-4. May be palmitoylated by ZDHHC3. Ubiquitinated at Lys-60, Lys-103 and Lys-104 by UBE3A, promoting its degradation by the proteasome. Ubiquitination at Lys-20 impairs the association with the lysosomal V-ATPase complex. Deubiquitination at Lys-20 by USP32 promotes the association with the lysosomal V-ATPase complex and subsequent activation of the mTORC1 complex.

Its subcellular location is the lysosome membrane. It localises to the late endosome membrane. Key component of the Ragulator complex, a multiprotein complex involved in amino acid sensing and activation of mTORC1, a signaling complex promoting cell growth in response to growth factors, energy levels, and amino acids. Activated by amino acids through a mechanism involving the lysosomal V-ATPase, the Ragulator plays a dual role for the small GTPases Rag (RagA/RRAGA, RagB/RRAGB, RagC/RRAGC and/or RagD/RRAGD): it (1) acts as a guanine nucleotide exchange factor (GEF), activating the small GTPases Rag and (2) mediates recruitment of Rag GTPases to the lysosome membrane. Activated Ragulator and Rag GTPases function as a scaffold recruiting mTORC1 to lysosomes where it is in turn activated. LAMTOR1 is directly responsible for anchoring the Ragulator complex to the lysosomal membrane. LAMTOR1 wraps around the other subunits of the Ragulator complex to hold them in place and interacts with the Rag GTPases, thereby playing a key role in the recruitment of the mTORC1 complex to lysosomes. Also involved in the control of embryonic stem cells differentiation via non-canonical RagC/RRAGC and RagD/RRAGD activation: together with FLCN, it is necessary to recruit and activate RagC/RRAGC and RagD/RRAGD at the lysosomes, and to induce exit of embryonic stem cells from pluripotency via non-canonical, mTOR-independent TFE3 inactivation. Also required for late endosomes/lysosomes biogenesis it may regulate both the recycling of receptors through endosomes and the MAPK signaling pathway through recruitment of some of its components to late endosomes. May be involved in cholesterol homeostasis regulating LDL uptake and cholesterol release from late endosomes/lysosomes. May also play a role in RHOA activation. This chain is Ragulator complex protein LAMTOR1, found in Homo sapiens (Human).